A 407-amino-acid polypeptide reads, in one-letter code: Arginine deiminase (407 aa).

C397 (amidino-cysteine intermediate) is an active-site residue.

Belongs to the arginine deiminase family.

Its subcellular location is the cytoplasm. It catalyses the reaction L-arginine + H2O = L-citrulline + NH4(+). It functions in the pathway amino-acid degradation; L-arginine degradation via ADI pathway; carbamoyl phosphate from L-arginine: step 1/2. This Escherichia coli O81 (strain ED1a) protein is Arginine deiminase.